The following is a 396-amino-acid chain: Protein-export membrane protein SecD (396 aa).

Transmembrane regions (helical) follow at residues 12–32 (ILIL…KGLD), 243–263 (LKGT…IVSI), 272–292 (IPIL…ASLI), 298–318 (LPSI…QIVI), 338–358 (FFII…LFVL), and 360–380 (VGML…GIFI).

This sequence belongs to the SecD/SecF family. SecD subfamily. In terms of assembly, part of the protein translocation apparatus. Forms a complex with SecF.

It is found in the cell membrane. In terms of biological role, involved in protein export. In Methanocaldococcus jannaschii (strain ATCC 43067 / DSM 2661 / JAL-1 / JCM 10045 / NBRC 100440) (Methanococcus jannaschii), this protein is Protein-export membrane protein SecD.